Reading from the N-terminus, the 200-residue chain is Glycerol-3-phosphate acyltransferase (200 aa).

5 helical membrane-spanning segments follow: residues 4-24 (FALC…AVIV), 53-73 (WAAL…VWCG), 80-100 (QFEL…PIFF), 115-135 (IAPI…LVFV), and 138-158 (GYSS…VWWF).

This sequence belongs to the PlsY family. Probably interacts with PlsX.

It is found in the cell inner membrane. The enzyme catalyses an acyl phosphate + sn-glycerol 3-phosphate = a 1-acyl-sn-glycero-3-phosphate + phosphate. The protein operates within lipid metabolism; phospholipid metabolism. Its function is as follows. Catalyzes the transfer of an acyl group from acyl-phosphate (acyl-PO(4)) to glycerol-3-phosphate (G3P) to form lysophosphatidic acid (LPA). This enzyme utilizes acyl-phosphate as fatty acyl donor, but not acyl-CoA or acyl-ACP. This chain is Glycerol-3-phosphate acyltransferase, found in Actinobacillus succinogenes (strain ATCC 55618 / DSM 22257 / CCUG 43843 / 130Z).